Consider the following 395-residue polypeptide: Chalcone synthase 7 (395 aa).

Cys-169 is a catalytic residue.

This sequence belongs to the thiolase-like superfamily. Chalcone/stilbene synthases family.

The catalysed reaction is (E)-4-coumaroyl-CoA + 3 malonyl-CoA + 3 H(+) = 2',4,4',6'-tetrahydroxychalcone + 3 CO2 + 4 CoA. Its pathway is secondary metabolite biosynthesis; flavonoid biosynthesis. Its function is as follows. The primary product of this enzyme is 4,2',4',6'-tetrahydroxychalcone (also termed naringenin-chalcone or chalcone) which can under specific conditions spontaneously isomerize into naringenin. The protein is Chalcone synthase 7 (CSF7) of Picea mariana (Black spruce).